Reading from the N-terminus, the 200-residue chain is Probable molybdenum cofactor guanylyltransferase (200 aa).

GTP contacts are provided by residues 9-11, lysine 21, aspartate 69, and aspartate 100; that span reads LAG. Aspartate 100 serves as a coordination point for Mg(2+).

It belongs to the MobA family. Mg(2+) serves as cofactor.

The protein localises to the cytoplasm. The enzyme catalyses Mo-molybdopterin + GTP + H(+) = Mo-molybdopterin guanine dinucleotide + diphosphate. Its function is as follows. Transfers a GMP moiety from GTP to Mo-molybdopterin (Mo-MPT) cofactor (Moco or molybdenum cofactor) to form Mo-molybdopterin guanine dinucleotide (Mo-MGD) cofactor. The protein is Probable molybdenum cofactor guanylyltransferase of Bacillus cereus (strain AH820).